Reading from the N-terminus, the 729-residue chain is Methionine--tRNA ligase (729 aa).

The short motif at 12–22 (PYVNNIPHLGN) is the 'HIGH' region element. Zn(2+) is bound by residues C143, C146, C155, and C158. Positions 330–334 (KFSKS) match the 'KMSKS' region motif. ATP is bound at residue K333. The tRNA-binding domain maps to 565–670 (FSEQVCLKVV…DNPIPGERII (106 aa)).

This sequence belongs to the class-I aminoacyl-tRNA synthetase family. MetG type 1 subfamily. As to quaternary structure, homodimer. Zn(2+) is required as a cofactor.

It localises to the cytoplasm. The catalysed reaction is tRNA(Met) + L-methionine + ATP = L-methionyl-tRNA(Met) + AMP + diphosphate. Functionally, is required not only for elongation of protein synthesis but also for the initiation of all mRNA translation through initiator tRNA(fMet) aminoacylation. This Borrelia hermsii (strain HS1 / DAH) protein is Methionine--tRNA ligase.